The sequence spans 488 residues: Katanin p60 ATPase-containing subunit A-like 1 (488 aa).

Residue M1 is modified to N-acetylmethionine. The disordered stretch occupies residues 128–179; sequence GAGARGLVGRAHQISKSDKAASRDKDYRARGRDDKARKNMQDGASDGEIPKF. A compositionally biased stretch (basic and acidic residues) spans 142–167; that stretch reads SKSDKAASRDKDYRARGRDDKARKNM. S172 carries the post-translational modification Phosphoserine. 246–253 provides a ligand contact to ATP; it reads GPPGTGKT.

Belongs to the AAA ATPase family. Katanin p60 subunit A1 subfamily. A-like 1 sub-subfamily. As to quaternary structure, interacts with KATNB1 and KATNBL1.

Its subcellular location is the cytoplasm. The protein resides in the cytoskeleton. It is found in the spindle pole. The protein localises to the spindle. The catalysed reaction is n ATP + n H2O + a microtubule = n ADP + n phosphate + (n+1) alpha/beta tubulin heterodimers.. Regulates microtubule dynamics in Sertoli cells, a process that is essential for spermiogenesis and male fertility. Severs microtubules in an ATP-dependent manner, promoting rapid reorganization of cellular microtubule arrays. Has microtubule-severing activity in vitro. This Rattus norvegicus (Rat) protein is Katanin p60 ATPase-containing subunit A-like 1 (Katnal1).